Here is a 180-residue protein sequence, read N- to C-terminus: Small ribosomal subunit protein uS4 (180 aa).

Positions 103-174 (RRLQTIVYKK…HPERMMIEKA (72 aa)) constitute an S4 RNA-binding domain.

It belongs to the universal ribosomal protein uS4 family. As to quaternary structure, part of the 30S ribosomal subunit. Contacts protein S5. The interaction surface between S4 and S5 is involved in control of translational fidelity.

One of the primary rRNA binding proteins, it binds directly to 16S rRNA where it nucleates assembly of the body of the 30S subunit. In terms of biological role, with S5 and S12 plays an important role in translational accuracy. This is Small ribosomal subunit protein uS4 from Pyrococcus horikoshii (strain ATCC 700860 / DSM 12428 / JCM 9974 / NBRC 100139 / OT-3).